A 673-amino-acid chain; its full sequence is UPF0313 protein blr7973 (673 aa).

The Radical SAM core domain maps to 332–611 (AWDMIKFSVT…KAFLRYHDPD (280 aa)). [4Fe-4S] cluster-binding residues include C346, C350, and C353. A disordered region spans residues 632–673 (RPDQLVPAHQPPGTGKAAGTRRPVRPGGKTQRFTTKGLRVMK).

It belongs to the UPF0313 family. Requires [4Fe-4S] cluster as cofactor.

This chain is UPF0313 protein blr7973, found in Bradyrhizobium diazoefficiens (strain JCM 10833 / BCRC 13528 / IAM 13628 / NBRC 14792 / USDA 110).